Consider the following 294-residue polypeptide: Cytidine deaminase (294 aa).

2 CMP/dCMP-type deaminase domains span residues Asp-48–Lys-168 and Leu-186–Ala-294. Residue Asn-89 to Glu-91 coordinates substrate. Residue His-102 coordinates Zn(2+). Catalysis depends on Glu-104, which acts as the Proton donor. Zn(2+)-binding residues include Cys-129 and Cys-132.

Belongs to the cytidine and deoxycytidylate deaminase family. Homodimer. Zn(2+) serves as cofactor.

It carries out the reaction cytidine + H2O + H(+) = uridine + NH4(+). The enzyme catalyses 2'-deoxycytidine + H2O + H(+) = 2'-deoxyuridine + NH4(+). This enzyme scavenges exogenous and endogenous cytidine and 2'-deoxycytidine for UMP synthesis. This is Cytidine deaminase from Escherichia coli (strain K12).